Consider the following 410-residue polypeptide: Putative ribonuclease E (410 aa).

The 81-residue stretch at 39–119 (SNIYKGKIVR…GTKGALLTTF (81 aa)) folds into the S1 motif domain. The Mg(2+) site is built by Asp303 and Asp346.

Belongs to the RNase E/G family. RNase E subfamily. Component of the RNA degradosome, which is a multiprotein complex involved in RNA processing and mRNA degradation. Within the RNA degradosome, RNase E assembles into a homotetramer formed by a dimer of dimers. Requires Mg(2+) as cofactor.

It is found in the cytoplasm. The protein resides in the cell inner membrane. The catalysed reaction is Endonucleolytic cleavage of single-stranded RNA in A- and U-rich regions.. Endoribonuclease that plays a central role in RNA processing and decay. Required for the maturation of 5S and 16S rRNAs and the majority of tRNAs. Also involved in the degradation of most mRNAs. The chain is Putative ribonuclease E (rne) from Buchnera aphidicola subsp. Baizongia pistaciae (strain Bp).